The chain runs to 174 residues: MELVIGRVVKAHGITGEVVVEIRTDEPDRRFTPGASLRAKRSRDGGTGRNYVIEGVREHGARLLVRLAGVNDRDTADGLRGSLFVIDSADLPPIDEPDTYYDHQLEGLRVRTTAGQDVGVVAEVLHTGAGELLAVKCDSGEVLVPFVGAIVTSVSLDDRILEIDPPDGLLDLGS.

The 74-residue stretch at 96–169 (EPDTYYDHQL…ILEIDPPDGL (74 aa)) folds into the PRC barrel domain.

This sequence belongs to the RimM family. As to quaternary structure, binds ribosomal protein uS19.

Its subcellular location is the cytoplasm. An accessory protein needed during the final step in the assembly of 30S ribosomal subunit, possibly for assembly of the head region. Essential for efficient processing of 16S rRNA. May be needed both before and after RbfA during the maturation of 16S rRNA. It has affinity for free ribosomal 30S subunits but not for 70S ribosomes. The protein is Ribosome maturation factor RimM of Mycobacterium marinum (strain ATCC BAA-535 / M).